The primary structure comprises 545 residues: Endo-beta-N-acetylglucosaminidase (545 aa).

Residues 1-36 form the signal peptide; sequence MTFIKQMMPRYVASMTAGIVAAAMAATCAFAPVANA. Residues 51 to 333 enclose the GH18 domain; it reads RHFMVYYRAW…EDLRRIVPSN (283 aa). The Proton donor role is filled by E184. The disordered stretch occupies residues 486–511; that stretch reads PVPTPDSTDQNGNRDKVTNHKVQGQP. A helical membrane pass occupies residues 518–538; sequence GISTDIIVAVGVTLAIAGVAL.

Belongs to the glycosyl hydrolase 18 family.

Its subcellular location is the cell membrane. It carries out the reaction an N(4)-(oligosaccharide-(1-&gt;3)-[oligosaccharide-(1-&gt;6)]-beta-D-Man-(1-&gt;4)-beta-D-GlcNAc-(1-&gt;4)-alpha-D-GlcNAc)-L-asparaginyl-[protein] + H2O = an oligosaccharide-(1-&gt;3)-[oligosaccharide-(1-&gt;6)]-beta-D-Man-(1-&gt;4)-D-GlcNAc + N(4)-(N-acetyl-beta-D-glucosaminyl)-L-asparaginyl-[protein]. Its function is as follows. Endoglycosidase with broad specificity that cleaves the chitobiose core of high mannose and complex N-linked glycans. Is able to release N-glycans from diverse host glycoproteins such as human and bovine lactoferrin, immunoglobulins A and G, and ribonuclease B. Is active directly on human breast milk - a complex matrix of lipids, oligosaccharides, and proteins with disparate glycosylation types - successfully removing a significant proportion of the total amount of N-glycans. Does not recognize O-linked glycans or free human milk oligosaccharides (HMO). In Bifidobacterium longum subsp. infantis (strain ATCC 15697 / DSM 20088 / JCM 1222 / NCTC 11817 / S12), this protein is Endo-beta-N-acetylglucosaminidase.